A 178-amino-acid chain; its full sequence is Nucleoside triphosphate/diphosphate phosphatase (178 aa).

Arginine 23 acts as the Proton donor in catalysis. Positions 87, 103, 105, 107, 120, and 123 each coordinate Mg(2+).

It belongs to the Ntdp family. The cofactor is Mg(2+).

It carries out the reaction a ribonucleoside 5'-triphosphate + H2O = a ribonucleoside 5'-diphosphate + phosphate + H(+). It catalyses the reaction a ribonucleoside 5'-diphosphate + H2O = a ribonucleoside 5'-phosphate + phosphate + H(+). Functionally, has nucleoside phosphatase activity towards nucleoside triphosphates and nucleoside diphosphates. The sequence is that of Nucleoside triphosphate/diphosphate phosphatase from Latilactobacillus sakei subsp. sakei (strain 23K) (Lactobacillus sakei subsp. sakei).